A 207-amino-acid polypeptide reads, in one-letter code: MTETDGQKDNNQDTAQAAADPVVSKPYIMPDDPEEGSNEALVREAADARDKMLRTLAEMENLRKRTQKEVADARTYGVTSFARDVLDIADNLQRALDAVPADARANAEPGLKALIEGVELTERSLLNALEKNGVKKFDPKGQKFDPNFQQAMYEVPDPSVPAGTVVQVVQAGFTIGDRVLRPALVGVAKGGAKAAPSDGGGETGNLN.

The segment covering 1–11 (MTETDGQKDNN) has biased composition (basic and acidic residues). The segment at 1–40 (MTETDGQKDNNQDTAQAAADPVVSKPYIMPDDPEEGSNEA) is disordered.

It belongs to the GrpE family. As to quaternary structure, homodimer.

It localises to the cytoplasm. Functionally, participates actively in the response to hyperosmotic and heat shock by preventing the aggregation of stress-denatured proteins, in association with DnaK and GrpE. It is the nucleotide exchange factor for DnaK and may function as a thermosensor. Unfolded proteins bind initially to DnaJ; upon interaction with the DnaJ-bound protein, DnaK hydrolyzes its bound ATP, resulting in the formation of a stable complex. GrpE releases ADP from DnaK; ATP binding to DnaK triggers the release of the substrate protein, thus completing the reaction cycle. Several rounds of ATP-dependent interactions between DnaJ, DnaK and GrpE are required for fully efficient folding. This chain is Protein GrpE, found in Rhodopseudomonas palustris (strain ATCC BAA-98 / CGA009).